The primary structure comprises 298 residues: N-acetylmuramic acid 6-phosphate etherase (298 aa).

Residues 55 to 218 form the SIS domain; the sequence is IHAQVSGGGR…STGLMIKSGK (164 aa). Residue Glu-83 is the Proton donor of the active site. Glu-114 is an active-site residue.

The protein belongs to the GCKR-like family. MurNAc-6-P etherase subfamily. As to quaternary structure, homodimer.

It catalyses the reaction N-acetyl-D-muramate 6-phosphate + H2O = N-acetyl-D-glucosamine 6-phosphate + (R)-lactate. Its pathway is amino-sugar metabolism; N-acetylmuramate degradation. The protein operates within amino-sugar metabolism; 1,6-anhydro-N-acetylmuramate degradation. It functions in the pathway cell wall biogenesis; peptidoglycan recycling. In terms of biological role, specifically catalyzes the cleavage of the D-lactyl ether substituent of MurNAc 6-phosphate, producing GlcNAc 6-phosphate and D-lactate. Together with AnmK, is also required for the utilization of anhydro-N-acetylmuramic acid (anhMurNAc) either imported from the medium or derived from its own cell wall murein, and thus plays a role in cell wall recycling. This chain is N-acetylmuramic acid 6-phosphate etherase, found in Escherichia coli (strain K12 / MC4100 / BW2952).